Here is an 89-residue protein sequence, read N- to C-terminus: Small ribosomal subunit protein uS15 (89 aa).

The protein belongs to the universal ribosomal protein uS15 family. As to quaternary structure, part of the 30S ribosomal subunit. Forms a bridge to the 50S subunit in the 70S ribosome, contacting the 23S rRNA.

Functionally, one of the primary rRNA binding proteins, it binds directly to 16S rRNA where it helps nucleate assembly of the platform of the 30S subunit by binding and bridging several RNA helices of the 16S rRNA. In terms of biological role, forms an intersubunit bridge (bridge B4) with the 23S rRNA of the 50S subunit in the ribosome. This Hahella chejuensis (strain KCTC 2396) protein is Small ribosomal subunit protein uS15.